Reading from the N-terminus, the 588-residue chain is Aspartate--tRNA ligase (588 aa).

Glutamate 174 lines the L-aspartate pocket. The interval 198–201 (QLFK) is aspartate. Arginine 220 serves as a coordination point for L-aspartate. ATP-binding positions include 220–222 (RDE) and glutamine 229. Histidine 448 contacts L-aspartate. Residue glutamate 482 participates in ATP binding. Arginine 489 lines the L-aspartate pocket. Residue 534-537 (GIDR) coordinates ATP.

It belongs to the class-II aminoacyl-tRNA synthetase family. Type 1 subfamily. As to quaternary structure, homodimer.

The protein resides in the cytoplasm. The enzyme catalyses tRNA(Asp) + L-aspartate + ATP = L-aspartyl-tRNA(Asp) + AMP + diphosphate. In terms of biological role, catalyzes the attachment of L-aspartate to tRNA(Asp) in a two-step reaction: L-aspartate is first activated by ATP to form Asp-AMP and then transferred to the acceptor end of tRNA(Asp). The protein is Aspartate--tRNA ligase of Xanthomonas oryzae pv. oryzae (strain PXO99A).